The sequence spans 236 residues: Phosphoribosylaminoimidazole-succinocarboxamide synthase (236 aa).

This sequence belongs to the SAICAR synthetase family.

The enzyme catalyses 5-amino-1-(5-phospho-D-ribosyl)imidazole-4-carboxylate + L-aspartate + ATP = (2S)-2-[5-amino-1-(5-phospho-beta-D-ribosyl)imidazole-4-carboxamido]succinate + ADP + phosphate + 2 H(+). It functions in the pathway purine metabolism; IMP biosynthesis via de novo pathway; 5-amino-1-(5-phospho-D-ribosyl)imidazole-4-carboxamide from 5-amino-1-(5-phospho-D-ribosyl)imidazole-4-carboxylate: step 1/2. The chain is Phosphoribosylaminoimidazole-succinocarboxamide synthase from Campylobacter concisus (strain 13826).